A 110-amino-acid polypeptide reads, in one-letter code: uncharacterized protein (110 aa).

Positions 1 to 23 are cleaved as a signal peptide; the sequence is MKRITINIITMFIAAAVISLTGT.

This is an uncharacterized protein from Bacillus subtilis (strain 168).